A 691-amino-acid chain; its full sequence is Probable E3 ubiquitin-protein ligase RHG1A (691 aa).

5 disordered regions span residues 71–91, 151–235, 316–336, 349–373, and 395–501; these read SLGE…NEQR, GPGT…PRGM, SFVV…GSRT, VGGT…SRSI, and QSSR…MHNR. A compositionally biased stretch (basic and acidic residues) spans 80–91; the sequence is TKDEASSHNEQR. 2 stretches are compositionally biased toward polar residues: residues 204-213 and 317-328; these read GESSSWTPGS and FVVSRNPNSTPV. Residues 361-370 show a composition bias toward basic and acidic residues; that stretch reads RNLHLDETRS. Positions 395–406 are enriched in polar residues; the sequence is QSSRNVTNGNLN. Residues 407-419 are compositionally biased toward low complexity; that stretch reads SASSVSRTGSTTS. Positions 429-440 are enriched in polar residues; that stretch reads NLAWTSYQNSPH. Residues 454-465 show a composition bias toward low complexity; it reads RSLLSSLAADAT. The RING-type; atypical zinc-finger motif lies at 637-678; it reads CCVCQEEYTEGEDMGTLECGHEFHSQCIKEWLKQKNLCPICK.

In terms of tissue distribution, expressed in stems, flowers, green siliques, cauline leaves, seeds and roots.

The enzyme catalyses S-ubiquitinyl-[E2 ubiquitin-conjugating enzyme]-L-cysteine + [acceptor protein]-L-lysine = [E2 ubiquitin-conjugating enzyme]-L-cysteine + N(6)-ubiquitinyl-[acceptor protein]-L-lysine.. It participates in protein modification; protein ubiquitination. Probable E3 ubiquitin-protein ligase that may possess E3 ubiquitin ligase activity in vitro. In Arabidopsis thaliana (Mouse-ear cress), this protein is Probable E3 ubiquitin-protein ligase RHG1A.